The chain runs to 204 residues: Guanylate kinase (204 aa).

The Guanylate kinase-like domain occupies 6–184 (GLLIVLSGPA…AVDRIKAIVT (179 aa)). 13-20 (GPAGVGKG) is an ATP binding site.

Belongs to the guanylate kinase family.

The protein localises to the cytoplasm. It carries out the reaction GMP + ATP = GDP + ADP. Essential for recycling GMP and indirectly, cGMP. The polypeptide is Guanylate kinase (gmk) (Halalkalibacterium halodurans (strain ATCC BAA-125 / DSM 18197 / FERM 7344 / JCM 9153 / C-125) (Bacillus halodurans)).